The sequence spans 86 residues: Exodeoxyribonuclease 7 small subunit (86 aa).

The protein belongs to the XseB family. In terms of assembly, heterooligomer composed of large and small subunits.

It localises to the cytoplasm. The enzyme catalyses Exonucleolytic cleavage in either 5'- to 3'- or 3'- to 5'-direction to yield nucleoside 5'-phosphates.. Its function is as follows. Bidirectionally degrades single-stranded DNA into large acid-insoluble oligonucleotides, which are then degraded further into small acid-soluble oligonucleotides. This is Exodeoxyribonuclease 7 small subunit from Xanthomonas oryzae pv. oryzae (strain MAFF 311018).